A 284-amino-acid polypeptide reads, in one-letter code: Flavin-dependent thymidylate synthase (284 aa).

Residues 27–237 form the ThyX domain; sequence GFIRVVDYMG…PLAYNAFVEY (211 aa). Residues T73, 96 to 98, and E104 each bind FAD; that span reads RHR. Residues 93–96 and 104–108 contribute to the dUMP site; these read QWIR and EYSAR. The short motif at 96–106 is the ThyX motif element; that stretch reads RHRTANVNEYS. The tract at residues 122–142 is disordered; sequence EQVAKQSDNNKQGSGEAFDPD. Over residues 125 to 134 the composition is skewed to polar residues; it reads AKQSDNNKQG. Residue R176 participates in dUMP binding. FAD-binding positions include 192–194 and H198; that span reads DLH. A dUMP-binding site is contributed by R203. The Involved in ionization of N3 of dUMP, leading to its activation role is filled by R203.

It belongs to the thymidylate synthase ThyX family. In terms of assembly, homotetramer. Requires FAD as cofactor.

The catalysed reaction is dUMP + (6R)-5,10-methylene-5,6,7,8-tetrahydrofolate + NADPH + H(+) = dTMP + (6S)-5,6,7,8-tetrahydrofolate + NADP(+). The protein operates within pyrimidine metabolism; dTTP biosynthesis. Its function is as follows. Catalyzes the reductive methylation of 2'-deoxyuridine-5'-monophosphate (dUMP) to 2'-deoxythymidine-5'-monophosphate (dTMP) while utilizing 5,10-methylenetetrahydrofolate (mTHF) as the methyl donor, and NADPH and FADH(2) as the reductant. The polypeptide is Flavin-dependent thymidylate synthase (Wolbachia pipientis wMel).